Consider the following 160-residue polypeptide: Anaerobic nitrite reductase AHB1 (160 aa).

One can recognise a Globin domain in the interval 8–157 (VFTEEQEALV…LVAAIKAEMN (150 aa)). The short motif at 41 to 45 (EIAPT) is the Homodimerization element. Ser-51, Lys-65, His-69, Arg-99, Ser-103, and His-104 together coordinate heme b. A Homodimerization motif is present at residues 111–123 (DEHFEVAKYALLE).

Belongs to the plant globin family. As to quaternary structure, homodimer. Heme b is required as a cofactor. In terms of tissue distribution, expressed in roots and rosette leaves.

It is found in the cytoplasm. The protein resides in the nucleus. The catalysed reaction is Fe(III)-heme b-[protein] + nitric oxide + H2O = Fe(II)-heme b-[protein] + nitrite + 2 H(+). Phytoglobin that reduces nitrite to nitric oxide (NO) under anoxic conditions (e.g. during flooding or in waterlogged soil). May not function as an oxygen storage or transport protein. Has an unusually high affinity for O(2) through an hexacoordinate heme iron because of a very low dissociation constant. The protein is Anaerobic nitrite reductase AHB1 of Arabidopsis thaliana (Mouse-ear cress).